Here is a 345-residue protein sequence, read N- to C-terminus: Mycothiol acetyltransferase (345 aa).

N-acetyltransferase domains lie at 6–149 (DTYE…KAME) and 164–345 (FEVL…RGRL). Glutamate 39 is a 1D-myo-inositol 2-(L-cysteinylamino)-2-deoxy-alpha-D-glucopyranoside binding site. 76 to 78 (LAV) lines the acetyl-CoA pocket. Glutamate 198, lysine 261, and glutamate 277 together coordinate 1D-myo-inositol 2-(L-cysteinylamino)-2-deoxy-alpha-D-glucopyranoside. Residues 281–283 (VCL) and 288–294 (RGRGLGQ) each bind acetyl-CoA. 1D-myo-inositol 2-(L-cysteinylamino)-2-deoxy-alpha-D-glucopyranoside is bound at residue tyrosine 315.

Belongs to the acetyltransferase family. MshD subfamily. Monomer.

The catalysed reaction is 1D-myo-inositol 2-(L-cysteinylamino)-2-deoxy-alpha-D-glucopyranoside + acetyl-CoA = mycothiol + CoA + H(+). In terms of biological role, catalyzes the transfer of acetyl from acetyl-CoA to desacetylmycothiol (Cys-GlcN-Ins) to form mycothiol. The polypeptide is Mycothiol acetyltransferase (Corynebacterium jeikeium (strain K411)).